A 436-amino-acid polypeptide reads, in one-letter code: GTPase Der (436 aa).

2 consecutive EngA-type G domains span residues 4-167 (PVVA…PKGG) and 176-351 (IKFC…DNHA). Residues 10–17 (GRPNVGKS), 57–61 (DTGGI), 119–122 (NKID), 182–189 (GRPNVGKS), 229–233 (DTAGM), and 294–297 (NKWD) each bind GTP. One can recognise a KH-like domain in the interval 352–436 (MRVQTNVLNE…PIKIIARPRK (85 aa)).

Belongs to the TRAFAC class TrmE-Era-EngA-EngB-Septin-like GTPase superfamily. EngA (Der) GTPase family. As to quaternary structure, associates with the 50S ribosomal subunit.

Functionally, GTPase that plays an essential role in the late steps of ribosome biogenesis. This Geobacillus kaustophilus (strain HTA426) protein is GTPase Der.